Reading from the N-terminus, the 270-residue chain is Cyclic AMP-dependent transcription factor ATF-1 (270 aa).

The tract at residues 1 to 91 (MEDSHKSNTS…DGENPGVSAV (91 aa)) is disordered. The segment covering 9-21 (TSETAPQSGSTVQ) has biased composition (polar residues). The KID domain maps to 31 to 90 (QVSSLSESEESQDSSDSIGSSQKTHGILARRPSYRKILKDLSSEDIRGRKGDGENPGVSA). Position 63 is a phosphoserine; by CaMK1, CDK3, RPS6KA4 and RPS6KA5 (S63). Basic and acidic residues predominate over residues 67–83 (ILKDLSSEDIRGRKGDG). S197 bears the Phosphoserine; by HIPK2 mark. Residues K207 and K214 each participate in a glycyl lysine isopeptide (Lys-Gly) (interchain with G-Cter in SUMO2) cross-link. Residues 212 to 270 (QLKREIRLMKNREAARECRRKKKEYVKCLENRVAVLENQNKTLIEELKTLKDLYSNKSV) enclose the bZIP domain. The segment at 214-238 (KREIRLMKNREAARECRRKKKEYVK) is basic motif. The leucine-zipper stretch occupies residues 240–261 (LENRVAVLENQNKTLIEELKTL).

The protein belongs to the bZIP family. ATF subfamily. As to quaternary structure, binds DNA as a dimer. Interacts with HIPK2 and CDK3. Interacts with MOTS-c, a peptide produced by the mitochondrially encoded 12S rRNA MT-RNR1; the interaction occurs in the nucleus following metabolic stress. In terms of processing, phosphorylated at Ser-197 by HIPK2 in response to genotoxic stress. This phosphorylation promotes transcription repression of FTH1 and other antioxidant detoxification genes. The CDK3-mediated phosphorylation at Ser-63 promotes its transactivation and transcriptional activities. Phosphorylated at Ser-63 by RPS6KA4 and RPS6KA5 in response to mitogenic or stress stimuli.

It localises to the nucleus. Functionally, this protein binds the cAMP response element (CRE) (consensus: 5'-GTGACGT[AC][AG]-3'), a sequence present in many viral and cellular promoters. Mediates PKA-induced stimulation of CRE-reporter genes. Represses the expression of FTH1 and other antioxidant detoxification genes. Triggers cell proliferation and transformation. The protein is Cyclic AMP-dependent transcription factor ATF-1 (ATF1) of Bos taurus (Bovine).